The primary structure comprises 687 residues: Transcription activator of gluconeogenesis SNOG_12336 (687 aa).

The disordered stretch occupies residues 1–56 (MASPDAEDASPSPEYRSDLDDDMAAEQKTDDGSPSQKSSNGQKPASNAKDPLRPRR). Residues 32 to 45 (GSPSQKSSNGQKPA) show a composition bias toward polar residues. A DNA-binding region (zn(2)-C6 fungal-type) is located at residues 63 to 91 (CFACQRAHLTCGDERPCTRCIKRGLQDHC). Composition is skewed to polar residues over residues 150–159 (PSGTFYQPPS) and 169–179 (HGRSFSDQQSP). Disordered regions lie at residues 150-214 (PSGT…GPLF), 300-411 (ESQS…KRHR), and 536-561 (GNSREADESEMSTQTNTTPNLTGQEA). Positions 195 to 212 (PPSSISQGQPGQMQQFGP) are enriched in low complexity. Positions 300–318 (ESQSRQNSMHIHTPTSSAT) are enriched in polar residues. Residues 342 to 357 (PSSHSTASPASTDASA) are compositionally biased toward low complexity. Polar residues-rich tracts occupy residues 362 to 384 (NPLSTATFFANTNRGQPQRSPTT), 392 to 402 (RPPSTALQPIH), and 546 to 561 (MSTQTNTTPNLTGQEA). The PAS domain occupies 482 to 553 (NLMTLQDHFT…SEMSTQTNTT (72 aa)).

This sequence belongs to the ERT1/acuK family.

The protein resides in the nucleus. Its function is as follows. Transcription factor which regulates nonfermentable carbon utilization. Activator of gluconeogenetic genes. The sequence is that of Transcription activator of gluconeogenesis SNOG_12336 from Phaeosphaeria nodorum (strain SN15 / ATCC MYA-4574 / FGSC 10173) (Glume blotch fungus).